A 504-amino-acid polypeptide reads, in one-letter code: Arrestin-related trafficking adapter 10 (504 aa).

It belongs to the ART10 family.

It is found in the cytoplasm. Functionally, may regulate endocytosis by recruiting RSP5 ubiquitin ligase activity to specific plasma membrane proteins in response to extracellular stimuli. The protein is Arrestin-related trafficking adapter 10 (ART10) of Candida glabrata (strain ATCC 2001 / BCRC 20586 / JCM 3761 / NBRC 0622 / NRRL Y-65 / CBS 138) (Yeast).